Here is a 711-residue protein sequence, read N- to C-terminus: Polyribonucleotide nucleotidyltransferase (711 aa).

2 residues coordinate Mg(2+): aspartate 486 and aspartate 492. Residues 553–612 enclose the KH domain; it reads PRIHTIKISPDKIKDVIGKGGSVIRALTEETGTTIEIEDDGTVKIAATDGEKAKFAIRRI. In terms of domain architecture, S1 motif spans 622 to 690; the sequence is GRIYNGKVTR…RQGRVRLSIK (69 aa). The disordered stretch occupies residues 690–711; that stretch reads KEATEQTQPAAAPEAPAAEQGE. The span at 694–711 shows a compositional bias: low complexity; the sequence is EQTQPAAAPEAPAAEQGE.

The protein belongs to the polyribonucleotide nucleotidyltransferase family. As to quaternary structure, component of the RNA degradosome, which is a multiprotein complex involved in RNA processing and mRNA degradation. Requires Mg(2+) as cofactor.

It localises to the cytoplasm. The enzyme catalyses RNA(n+1) + phosphate = RNA(n) + a ribonucleoside 5'-diphosphate. Its function is as follows. Involved in mRNA degradation. Catalyzes the phosphorolysis of single-stranded polyribonucleotides processively in the 3'- to 5'-direction. The protein is Polyribonucleotide nucleotidyltransferase of Enterobacter sp. (strain 638).